A 375-amino-acid polypeptide reads, in one-letter code: Succinyl-diaminopimelate desuccinylase (375 aa).

Histidine 66 serves as a coordination point for Zn(2+). Aspartate 68 is a catalytic residue. Aspartate 99 contributes to the Zn(2+) binding site. Glutamate 133 acts as the Proton acceptor in catalysis. 3 residues coordinate Zn(2+): glutamate 134, glutamate 162, and histidine 348.

It belongs to the peptidase M20A family. DapE subfamily. Homodimer. The cofactor is Zn(2+). Co(2+) is required as a cofactor.

The catalysed reaction is N-succinyl-(2S,6S)-2,6-diaminopimelate + H2O = (2S,6S)-2,6-diaminopimelate + succinate. The protein operates within amino-acid biosynthesis; L-lysine biosynthesis via DAP pathway; LL-2,6-diaminopimelate from (S)-tetrahydrodipicolinate (succinylase route): step 3/3. Functionally, catalyzes the hydrolysis of N-succinyl-L,L-diaminopimelic acid (SDAP), forming succinate and LL-2,6-diaminopimelate (DAP), an intermediate involved in the bacterial biosynthesis of lysine and meso-diaminopimelic acid, an essential component of bacterial cell walls. The polypeptide is Succinyl-diaminopimelate desuccinylase (Stenotrophomonas maltophilia (strain R551-3)).